The chain runs to 212 residues: Inner membrane-spanning protein YciB (212 aa).

5 helical membrane-spanning segments follow: residues 49–69 (APVLLATVVVILATLAQVLYL), 78–98 (TMLWVSLGLVTVMGGATIWFH), 105–125 (WKPSVLYWVMSAAFLLAPIVA), 150–170 (LAWAAFFAGMGVLNIWVAYNF), and 178–198 (FKAFGGMGLMFVFMLAQGLYM).

It belongs to the YciB family.

It is found in the cell inner membrane. Its function is as follows. Plays a role in cell envelope biogenesis, maintenance of cell envelope integrity and membrane homeostasis. The chain is Inner membrane-spanning protein YciB from Leptothrix cholodnii (strain ATCC 51168 / LMG 8142 / SP-6) (Leptothrix discophora (strain SP-6)).